Consider the following 329-residue polypeptide: Indolepyruvate C-methyltransferase (329 aa).

It belongs to the methyltransferase superfamily.

The catalysed reaction is indole-3-pyruvate + S-adenosyl-L-methionine = (R)-3-(indol-3-yl)-2-oxobutanoate + S-adenosyl-L-homocysteine + H(+). Strongly inhibited by the thiol reagents p-chloromercuribenzoate and N-ethylmaleimide. Partially inhibited by o-phenanthroline and 2,2'-dipyridyl. Competitively inhibited by L-tryptophan and indolmycin. Functionally, involved in the biosynthesis of the antibiotic indolmycin, an inhibitor of the bacterial tryptophan-tRNA synthetases. Catalyzes the transfer of a methyl group from S-adenosyl-L-methionine to position 3 of the aliphatic side chain of (indol-3-yl)pyruvate to yield 3-methylindolepyruvate. This chain is Indolepyruvate C-methyltransferase, found in Streptomyces griseus.